The following is an 82-amino-acid chain: Small ribosomal subunit protein bS16 (82 aa).

The protein belongs to the bacterial ribosomal protein bS16 family.

The chain is Small ribosomal subunit protein bS16 from Bdellovibrio bacteriovorus (strain ATCC 15356 / DSM 50701 / NCIMB 9529 / HD100).